The sequence spans 79 residues: Large ribosomal subunit protein bL31c (79 aa).

Belongs to the bacterial ribosomal protein bL31 family. Type A subfamily. In terms of assembly, part of the 50S ribosomal subunit.

It localises to the plastid. It is found in the chloroplast. Its function is as follows. Binds the 23S rRNA. In Gracilaria tenuistipitata var. liui (Red alga), this protein is Large ribosomal subunit protein bL31c.